Reading from the N-terminus, the 238-residue chain is Protein LicA homolog (238 aa).

It belongs to the peptidase S49 family.

The polypeptide is Protein LicA homolog (licA) (Mycoplasma capricolum subsp. capricolum (strain California kid / ATCC 27343 / NCTC 10154)).